Reading from the N-terminus, the 869-residue chain is Probable inorganic carbon transporter subunit DabA (869 aa).

The segment at 1-32 is disordered; that stretch reads MSTATLEQRAKRGEAPRANDAGHCAHPADGAR. Positions 8-17 are enriched in basic and acidic residues; the sequence is QRAKRGEAPR. Zn(2+)-binding residues include cysteine 376, aspartate 378, histidine 555, and cysteine 570.

It belongs to the inorganic carbon transporter (TC 9.A.2) DabA family. Forms a complex with DabB. Zn(2+) is required as a cofactor.

The protein resides in the cell inner membrane. Part of an energy-coupled inorganic carbon pump. The chain is Probable inorganic carbon transporter subunit DabA from Burkholderia multivorans (strain ATCC 17616 / 249).